The primary structure comprises 492 residues: Virion host shutoff protein (492 aa).

3 disordered regions span residues 110-130 (EEAS…SRPS), 288-307 (SQAR…LESM), and 334-371 (EDDY…ELVQ).

This sequence belongs to the herpesviridae VHS protein family. Interacts with human EIF4H, EIF4A1 and EIF4A2; interaction with eIF4AI and EIF4A2 presumably allows Vhs protein to associate with the eIF4F cap-binding complex.

It localises to the virion. Functionally, minor structural protein that acts as an endoribonuclease during lytic infection. Degrades host mRNAs in the cytoplasm by cutting them at preferred sites, including some in regions of translation initiation. Together with inhibition of host splicing by ICP27, contributes to an overall decrease in host protein synthesis. Also, after the onset of viral transcription, accelerates the turnover of viral mRNA, thereby facilitating the sequential expression of different classes of viral genes. Binds translation initiation factors eIF4H, eIF4AI, and eIF4AII, thereby may interact directly with the translation initiation complex and thus digest specifically mRNAs. Also impedes antigen presentation by major histocompatibility complex class I and class II molecules, inhibits secretion of cytokines that would otherwise recruit lymphocytes and neutrophils cells to the site of infection and blocks the activation of dendritic cells. Impedes the alpha/beta interferon-mediated response to infection. Inhibits the integrated stress response (ISR) in the infected cell, this function requires the endonuclease activity. Stress granule formation is thus inhibited, which allows protein synthesis and viral replication. This Homo sapiens (Human) protein is Virion host shutoff protein (UL41).